The chain runs to 417 residues: UDP-N-acetylglucosamine 1-carboxyvinyltransferase (417 aa).

22–23 serves as a coordination point for phosphoenolpyruvate; the sequence is KN. Residue arginine 93 coordinates UDP-N-acetyl-alpha-D-glucosamine. The active-site Proton donor is the cysteine 117. Cysteine 117 is modified (2-(S-cysteinyl)pyruvic acid O-phosphothioketal). UDP-N-acetyl-alpha-D-glucosamine-binding positions include 122-126, aspartate 304, and isoleucine 326; that span reads RPVDQ.

It belongs to the EPSP synthase family. MurA subfamily.

Its subcellular location is the cytoplasm. It catalyses the reaction phosphoenolpyruvate + UDP-N-acetyl-alpha-D-glucosamine = UDP-N-acetyl-3-O-(1-carboxyvinyl)-alpha-D-glucosamine + phosphate. It participates in cell wall biogenesis; peptidoglycan biosynthesis. In terms of biological role, cell wall formation. Adds enolpyruvyl to UDP-N-acetylglucosamine. In Neisseria meningitidis serogroup C (strain 053442), this protein is UDP-N-acetylglucosamine 1-carboxyvinyltransferase.